The chain runs to 353 residues: Ubiquinol oxidase 2, mitochondrial (353 aa).

The N-terminal 21 residues, 1–21 (MSQLITKAALRVLLVCGRGNC), are a transit peptide targeting the mitochondrion. A helical transmembrane segment spans residues 178–198 (AMMLETVAAVPGMVGGMLLHL). The Fe cation site is built by Glu-182, Glu-221, and His-224. A helical membrane pass occupies residues 240–260 (LLVMLVQGIFFNSFFVCYVIS). Residues Glu-272, Glu-323, and His-326 each contribute to the Fe cation site.

The protein belongs to the alternative oxidase family. Homodimer; disulfide-linked. Fe cation serves as cofactor. In terms of tissue distribution, maximally expressed in dry seeds. Detected in roots, stems and leaves.

The protein localises to the mitochondrion inner membrane. It catalyses the reaction 2 a ubiquinol + O2 = 2 a ubiquinone + 2 H2O. Its function is as follows. Catalyzes the cyanide-resistant oxidation of ubiquinol and the reduction of molecular oxygen to water, but does not translocate protons and consequently is not linked to oxidative phosphorylation. May increase respiration when the cytochrome respiratory pathway is restricted, or in response to low temperatures. In Arabidopsis thaliana (Mouse-ear cress), this protein is Ubiquinol oxidase 2, mitochondrial (AOX2).